Reading from the N-terminus, the 291-residue chain is Glutathione S-transferase 2 (291 aa).

The region spanning 2–83 (SPVKVFGHPM…YILRKYGGTA (82 aa)) is the GST N-terminal domain. Glutathione contacts are provided by residues 41 to 42 (HK), 54 to 55 (KM), and 67 to 68 (KS). Residues 93-223 (GIEELAMVDV…RVCKHMPTEF (131 aa)) form the GST C-terminal domain.

Belongs to the GST superfamily. Phi family.

It carries out the reaction RX + glutathione = an S-substituted glutathione + a halide anion + H(+). Functionally, conjugation of reduced glutathione to a wide number of exogenous and endogenous hydrophobic electrophiles. This Triticum aestivum (Wheat) protein is Glutathione S-transferase 2 (GSTA2).